A 218-amino-acid chain; its full sequence is Peptide methionine sulfoxide reductase MsrA (218 aa).

Cys-57 is a catalytic residue.

It belongs to the MsrA Met sulfoxide reductase family.

It carries out the reaction L-methionyl-[protein] + [thioredoxin]-disulfide + H2O = L-methionyl-(S)-S-oxide-[protein] + [thioredoxin]-dithiol. It catalyses the reaction [thioredoxin]-disulfide + L-methionine + H2O = L-methionine (S)-S-oxide + [thioredoxin]-dithiol. In terms of biological role, has an important function as a repair enzyme for proteins that have been inactivated by oxidation. Catalyzes the reversible oxidation-reduction of methionine sulfoxide in proteins to methionine. The chain is Peptide methionine sulfoxide reductase MsrA from Brucella abortus (strain S19).